Reading from the N-terminus, the 100-residue chain is ESAT-6-like protein EsxB (100 aa).

Residues G80–I100 are disordered.

This sequence belongs to the WXG100 family. CFP-10 subfamily. Forms a tight 1:1 complex with EsxA. An artificial EsxA-EsxB heterodimer interacts with EspA.

Its subcellular location is the secreted. Functionally, an exported protein. Plays a role in DNA conjugation, in at least a donor strain. The chain is ESAT-6-like protein EsxB from Mycolicibacterium smegmatis (strain ATCC 700084 / mc(2)155) (Mycobacterium smegmatis).